The sequence spans 557 residues: Formate--tetrahydrofolate ligase 2 (557 aa).

66–73 (TPAGEGKT) contributes to the ATP binding site.

The protein belongs to the formate--tetrahydrofolate ligase family.

The catalysed reaction is (6S)-5,6,7,8-tetrahydrofolate + formate + ATP = (6R)-10-formyltetrahydrofolate + ADP + phosphate. It participates in one-carbon metabolism; tetrahydrofolate interconversion. In Streptococcus pyogenes serotype M18 (strain MGAS8232), this protein is Formate--tetrahydrofolate ligase 2.